Here is a 305-residue protein sequence, read N- to C-terminus: Elongation factor Ts (305 aa).

Positions 81–84 (TDFV) are involved in Mg(2+) ion dislocation from EF-Tu.

Belongs to the EF-Ts family.

It is found in the cytoplasm. Its function is as follows. Associates with the EF-Tu.GDP complex and induces the exchange of GDP to GTP. It remains bound to the aminoacyl-tRNA.EF-Tu.GTP complex up to the GTP hydrolysis stage on the ribosome. This is Elongation factor Ts from Nitratiruptor sp. (strain SB155-2).